The following is a 195-amino-acid chain: Nucleoid occlusion factor SlmA (195 aa).

The region spanning 6-66 (PSRRESILQA…ALIEFAEEAV (61 aa)) is the HTH tetR-type domain. Residues 29-48 (TTAGLAKTVGVTEAALYRHF) constitute a DNA-binding region (H-T-H motif). Residues 118-138 (RKRASQFFERLETQIRQALKE) adopt a coiled-coil conformation.

Belongs to the nucleoid occlusion factor SlmA family. In terms of assembly, homodimer. Interacts with FtsZ.

The protein resides in the cytoplasm. It localises to the nucleoid. In terms of biological role, required for nucleoid occlusion (NO) phenomenon, which prevents Z-ring formation and cell division over the nucleoid. Acts as a DNA-associated cell division inhibitor that binds simultaneously chromosomal DNA and FtsZ, and disrupts the assembly of FtsZ polymers. SlmA-DNA-binding sequences (SBS) are dispersed on non-Ter regions of the chromosome, preventing FtsZ polymerization at these regions. The sequence is that of Nucleoid occlusion factor SlmA from Marinobacter nauticus (strain ATCC 700491 / DSM 11845 / VT8) (Marinobacter aquaeolei).